Consider the following 265-residue polypeptide: Palmitoyltransferase ZDHHC21 (265 aa).

Residues 1–16 (MGLRIHFVVDPHGWCC) are Cytoplasmic-facing. A helical membrane pass occupies residues 17-37 (MGLIVFVWLYNFFLIPKIVLF). Residues 38–44 (PHYEEGH) are Extracellular-facing. A helical membrane pass occupies residues 45-65 (IPGILIIIFYGIAMFCLVALV). Residues 66–133 (RASITDPGRL…NNCVGEDNHW (68 aa)) lie on the Cytoplasmic side of the membrane. The DHHC domain occupies 90–140 (ELCNKCNLMRPKRSHHCSRCGHCVRRMDHHCPWINNCVGEDNHWLFLQLCF). C120 acts as the S-palmitoyl cysteine intermediate in catalysis. A helical transmembrane segment spans residues 134–154 (LFLQLCFYTELLTCYALMFSF). Residues 155–185 (CHYYYFLPLKKRNLDLFVVRHELAIMRLAAF) lie on the Extracellular side of the membrane. A helical membrane pass occupies residues 186-206 (MGITMLVGITGLFYTQLIGII). Residues 207–265 (TDTTSIEKMSNCCEEISRPRKPWQQTFSEVFGTRWKILWFIPFRRRQPLRVPYHFANHV) are Cytoplasmic-facing.

This sequence belongs to the DHHC palmitoyltransferase family.

The protein resides in the golgi apparatus membrane. The protein localises to the golgi apparatus. It localises to the cis-Golgi network membrane. It is found in the cell membrane. It catalyses the reaction L-cysteinyl-[protein] + hexadecanoyl-CoA = S-hexadecanoyl-L-cysteinyl-[protein] + CoA. Functionally, palmitoyltransferase that catalyzes the addition of palmitate onto various protein substrates. Palmitoylates sex steroid hormone receptors, including ESR1, PGR and AR, thereby regulating their targeting to the plasma membrane. This affects rapid intracellular signaling by sex hormones via ERK and AKT kinases and the generation of cAMP, but does not affect that mediated by their nuclear receptor. Palmitoylates FYN, regulates its localization in hair follicles and plays a key role in epidermal homeostasis and hair follicle differentiation. Through the palmitoylation of PLCB1 and the regulation of PLCB1 downstream signaling may indirectly regulate the function of the endothelial barrier and the adhesion of leukocytes to the endothelium. Also has a palmitoyltransferase activity toward ADRA1D, positively regulating its activity and expression and may thereby play a role in vascular contraction. May also palmitoylate eNOS and LCK. The chain is Palmitoyltransferase ZDHHC21 from Bos taurus (Bovine).